A 307-amino-acid polypeptide reads, in one-letter code: UDP-N-acetylenolpyruvoylglucosamine reductase (307 aa).

Residues 33–198 enclose the FAD-binding PCMH-type domain; the sequence is KVGGPVDILV…LEAILKLSLG (166 aa). R177 is a catalytic residue. The active-site Proton donor is S227. The active site involves E297.

The protein belongs to the MurB family. FAD is required as a cofactor.

Its subcellular location is the cytoplasm. The enzyme catalyses UDP-N-acetyl-alpha-D-muramate + NADP(+) = UDP-N-acetyl-3-O-(1-carboxyvinyl)-alpha-D-glucosamine + NADPH + H(+). It participates in cell wall biogenesis; peptidoglycan biosynthesis. Cell wall formation. This is UDP-N-acetylenolpyruvoylglucosamine reductase from Clostridium tetani (strain Massachusetts / E88).